Reading from the N-terminus, the 147-residue chain is Mitochondrial import receptor subunit TOM20 homolog (147 aa).

Residues 1–3 are Mitochondrial intermembrane-facing; it reads MVV. Residues 4–26 form a helical membrane-spanning segment; it reads VGKTSAIAAGVCGALFLGYCIYF. The Cytoplasmic portion of the chain corresponds to 27–147; that stretch reads DRKRRSDPNF…AQNLAEDDVE (121 aa).

Belongs to the Tom20 family. As to quaternary structure, forms part of the preprotein translocase complex of the outer mitochondrial membrane (TOM complex). Interacts with tom22.

The protein resides in the mitochondrion outer membrane. Its function is as follows. Central component of the receptor complex responsible for the recognition and translocation of cytosolically synthesized mitochondrial preproteins. Together with tom22 functions as the transit peptide receptor at the surface of the mitochondrion outer membrane and facilitates the movement of preproteins into the tom40 translocation pore. This Xenopus tropicalis (Western clawed frog) protein is Mitochondrial import receptor subunit TOM20 homolog (tomm20).